Here is a 262-residue protein sequence, read N- to C-terminus: Serine/arginine-rich SC35-like splicing factor SCL30A (262 aa).

2 disordered regions span residues 1 to 38 (MRGR…LPTS) and 115 to 262 (ENRK…SPSQ). Phosphoserine occurs at positions 9 and 20. The region spanning 37-115 (TSLLVRNLRH…RELTVVFAEE (79 aa)) is the RRM domain. Residues 115 to 140 (ENRKKPTEMRTRDRGGRSNRFQDRRR) are compositionally biased toward basic and acidic residues. Residues 150–161 (PPRRGRRSRSRS) are compositionally biased toward basic residues. Residues Ser-166, Ser-174, Ser-176, and Ser-178 each carry the phosphoserine modification. Positions 180–190 (QDRRYEKERSY) are enriched in basic and acidic residues. Phosphoserine is present on residues Ser-191 and Ser-193. The span at 209–226 (VKSHSRSPRRSVSPRKNR) shows a compositional bias: basic residues. The span at 234-246 (RSQSPVPRQSRSP) shows a compositional bias: low complexity. Residues Ser-235, Ser-259, and Ser-261 each carry the phosphoserine modification.

The protein belongs to the splicing factor SR family. SCL subfamily. Component of the spliceosome. Interacts with SNRNP35, CYP59 and RS2Z33.

It localises to the nucleus speckle. Its function is as follows. Involved in intron recognition and spliceosome assembly. Binds probably to multiple 5'-GAAG-3' repeats found in its third intron, suggesting autoregulation of alternative splicing. May be necessary for accurate splicing of the 3' region of introns. This is Serine/arginine-rich SC35-like splicing factor SCL30A (SCL30A) from Arabidopsis thaliana (Mouse-ear cress).